The following is a 1423-amino-acid chain: MYFLSGWPKRLLCPLGSPAEAPFHVQSDPQRAFFAVLAAARLSIWYSRPSVLIVTYKEPAKSSTQFGSYKQAEWRPDSTMIAVSTANGYILFFHITSTRGDKYLYEPVYPKGSPQMKGTPHFKEEQCAPALNLEMRKILDLQAPIMSLQSVLEDLLVATSDGLLHLIHWEGMTNGRKAINLCTVPFSVDLQSSRVGSFLGFTDVHIRDMEYCATLDGFAVVFNDGKVGFITPVSSRFTAEQLHGVWPQDVVDGTCVAVNNKYRLMAFGCVSGSVQVYTIDNSTGAMLLSHKLELTAKQYPDIWNKTGAVKLMRWSPDNSVVIVTWEYGGLSLWSVFGAQLICTLGGDFAYRSDGTKKDPLKINSMSWGAEGYHLWVISGFGSQNTEIESDLRSVVKQPSILLFQFIKSVLTVNPCMSNQEQVLLQGEDRLYLNCGEASQTQNPRSSSTHSEHKPSREKSPFADGGLESQGLSTLLGHRHWHVVQISSTYLESNWPIRFSAIDKLGQNIAVVGKFGFAHYSLLTKKWKLFGNITQEQNMIVTGGLAWWNDFMVLACYNINDRQEELRVYLRTSNLDNAFAHVTKAQAETLLLSVFQDMVIVFRADCSICLYSIERKSDGPNTTAGIQVLQEVSMSRYIPHPFLVVSVTLTSVSTENGITLKMPQQARGAESIMLNLAGQLIMMQRDRSGPQIREKDSNPNNQRKLLPFCPPVVLAQSVENVWTTCRANKQKRHLLEALWLSCGGAGMKVWLPLFPRDHRKPHSFLSQRIMLPFHINIYPLAVLFEDALVLGAVNDTLLYDSLYTRNNAREQLEVLFPFCVVERTSQIYLHHILRQLLVRNLGEQALLLAQSCATLPYFPHVLELMLHEVLEEEATSREPIPDPLLPTVAKFITEFPLFLQTVVHCARKTEYALWNYLFAAVGNPKDLFEECLMAQDLDTAASYLIILQNMEVPAVSRQHATLLFNTALEQGKWDLCRHMIRFLKAIGSGESETPPSTPTAQEPSSSGGFEFFRNRSISLSQSAENVPASKFSLQKTLSMPSGPSGKRWSKDSDCAENMYIDMMLWRHARRLLEDVRLKDLGCFAAQLGFELISWLCKERTRAARVDNFVIALKRLHKDFLWPLPIIPASSISSPFKNGKYRTVGEQLLKSQSADPFLNLEMDAGISNIQRSQSWLSNIGPTHHEIDTASSHGPQMQDAFLSPLSNKGDECSIGSATDLTESSSMVDGDWTMVDENFSTLSLTQSELEHISMELASKGPHKSQVQLRYLLHIFMEAGCLDWCIVIGLILRESSIINQILVITQSSEVDGEMLQNIKTGLHAVDRWASTDCPGYKPFLNIIKPQLQKLSEITEEQVQPDAFQPITMGKTPEQTSPRAEESRGSSSHGSIPQGEVGSSNMVSRKEEDTAQAEEEEPFQDGTYDCSVS.

WD repeat units follow at residues 64–103 (TQFG…GDKY) and 304–343 (NKTG…LICT). Polar residues predominate over residues 437–448 (ASQTQNPRSSST). The disordered stretch occupies residues 437–463 (ASQTQNPRSSSTHSEHKPSREKSPFAD). Basic and acidic residues predominate over residues 449 to 460 (HSEHKPSREKSP). Thr992 and Thr996 each carry phosphothreonine. Phosphoserine is present on residues Ser1015, Ser1017, Ser1019, Ser1037, and Ser1172. The interval 1355–1423 (PDAFQPITMG…QDGTYDCSVS (69 aa)) is disordered. Residues 1379–1397 (GSSSHGSIPQGEVGSSNMV) show a composition bias toward polar residues. Acidic residues predominate over residues 1404-1413 (TAQAEEEEPF).

It belongs to the RIC1 family. As to quaternary structure, forms a complex with RGP1; the interaction enhances RAB6A GTPase activity. Interacts (via central domain) with RGP1. Interacts with RAB6A; the interaction is direct with a preference for RAB6A-GDP. Interacts (via C-terminus domain) with RAB33B; the interaction is direct with a preference for RAB33B-GTP. Interacts with GJA1. As to expression, present in kidney and various cell lines (at protein level). Widely expressed at low level.

The protein resides in the cytoplasm. It is found in the cytosol. The protein localises to the membrane. Functionally, the RIC1-RGP1 complex acts as a guanine nucleotide exchange factor (GEF), which activates RAB6A by exchanging bound GDP for free GTP, and may thereby be required for efficient fusion of endosome-derived vesicles with the Golgi compartment. The RIC1-RGP1 complex participates in the recycling of mannose-6-phosphate receptors. Required for phosphorylation and localization of GJA1. Is a regulator of procollagen transport and secretion, and is required for correct cartilage morphogenesis and development of the craniofacial skeleton. The chain is Guanine nucleotide exchange factor subunit RIC1 from Homo sapiens (Human).